A 693-amino-acid polypeptide reads, in one-letter code: Glycine--tRNA ligase beta subunit (693 aa).

Positions 65–74 are enriched in basic and acidic residues; sequence QPDKSVEKRG. Positions 65-84 are disordered; the sequence is QPDKSVEKRGPAVKAAFDDS.

It belongs to the class-II aminoacyl-tRNA synthetase family. Tetramer of two alpha and two beta subunits.

Its subcellular location is the cytoplasm. The catalysed reaction is tRNA(Gly) + glycine + ATP = glycyl-tRNA(Gly) + AMP + diphosphate. This Marinobacter nauticus (strain ATCC 700491 / DSM 11845 / VT8) (Marinobacter aquaeolei) protein is Glycine--tRNA ligase beta subunit.